The following is a 207-amino-acid chain: Ribosomal RNA small subunit methyltransferase G (207 aa).

S-adenosyl-L-methionine contacts are provided by residues Gly76, Gln81, 127–128 (VE), and Arg141.

The protein belongs to the methyltransferase superfamily. RNA methyltransferase RsmG family.

Its subcellular location is the cytoplasm. The catalysed reaction is guanosine(527) in 16S rRNA + S-adenosyl-L-methionine = N(7)-methylguanosine(527) in 16S rRNA + S-adenosyl-L-homocysteine. Functionally, specifically methylates the N7 position of guanine in position 527 of 16S rRNA. In Neisseria meningitidis serogroup C (strain 053442), this protein is Ribosomal RNA small subunit methyltransferase G.